The following is a 386-amino-acid chain: ATP phosphoribosyltransferase regulatory subunit (386 aa).

This sequence belongs to the class-II aminoacyl-tRNA synthetase family. HisZ subfamily. Heteromultimer composed of HisG and HisZ subunits.

Its subcellular location is the cytoplasm. Its pathway is amino-acid biosynthesis; L-histidine biosynthesis; L-histidine from 5-phospho-alpha-D-ribose 1-diphosphate: step 1/9. Its function is as follows. Required for the first step of histidine biosynthesis. May allow the feedback regulation of ATP phosphoribosyltransferase activity by histidine. The sequence is that of ATP phosphoribosyltransferase regulatory subunit from Rhodospirillum centenum (strain ATCC 51521 / SW).